A 184-amino-acid chain; its full sequence is Phosphonoformate cytidylyltransferase (184 aa).

The enzyme catalyses phosphonoformate + CTP = CMP-5'-phosphonoformate + diphosphate. It functions in the pathway secondary metabolite biosynthesis; bialaphos biosynthesis. Catalyzes the displacement of the beta- and gamma-phosphates of CTP by phosphonoformate to produce CMP-5'-phosphonoformate, an intermediate in the biosynthesis of phosphinothricin tripeptide (PTT), also known as bialaphos (BA), a natural-product antibiotic and potent herbicide. This is Phosphonoformate cytidylyltransferase from Streptomyces viridochromogenes (strain DSM 40736 / JCM 4977 / BCRC 1201 / Tue 494).